The sequence spans 400 residues: Formate-dependent phosphoribosylglycinamide formyltransferase (400 aa).

Residues 22 to 23 and Glu82 contribute to the N(1)-(5-phospho-beta-D-ribosyl)glycinamide site; that span reads EL. Residues Arg114, Lys155, 160–165, 195–198, and Glu203 each bind ATP; these read SSGKGQ and EGFV. The ATP-grasp domain occupies 119–308; sequence RLAAEELGLS…EFALHARALL (190 aa). Glu267 and Glu279 together coordinate Mg(2+). N(1)-(5-phospho-beta-D-ribosyl)glycinamide is bound by residues Asp286, Lys356, and 363-364; that span reads RR.

It belongs to the PurK/PurT family. As to quaternary structure, homodimer.

The catalysed reaction is N(1)-(5-phospho-beta-D-ribosyl)glycinamide + formate + ATP = N(2)-formyl-N(1)-(5-phospho-beta-D-ribosyl)glycinamide + ADP + phosphate + H(+). It functions in the pathway purine metabolism; IMP biosynthesis via de novo pathway; N(2)-formyl-N(1)-(5-phospho-D-ribosyl)glycinamide from N(1)-(5-phospho-D-ribosyl)glycinamide (formate route): step 1/1. Involved in the de novo purine biosynthesis. Catalyzes the transfer of formate to 5-phospho-ribosyl-glycinamide (GAR), producing 5-phospho-ribosyl-N-formylglycinamide (FGAR). Formate is provided by PurU via hydrolysis of 10-formyl-tetrahydrofolate. The chain is Formate-dependent phosphoribosylglycinamide formyltransferase from Hahella chejuensis (strain KCTC 2396).